A 224-amino-acid chain; its full sequence is Thylakoid lumenal 15 kDa protein 1, chloroplastic (224 aa).

The transit peptide at Met1–Arg34 directs the protein to the chloroplast. Residues Cys35 to Ala81 constitute a thylakoid transit peptide. Pentapeptide repeat domains lie at Ser116–Leu155 and Ala156–Asp196.

Its subcellular location is the plastid. The protein resides in the chloroplast thylakoid lumen. The protein is Thylakoid lumenal 15 kDa protein 1, chloroplastic of Arabidopsis thaliana (Mouse-ear cress).